A 331-amino-acid polypeptide reads, in one-letter code: Glyceraldehyde-3-phosphate dehydrogenase 2 (331 aa).

NAD(+) contacts are provided by residues 11 to 12 (RI), Asp-33, and Arg-78. Residues 148–150 (SCT), Thr-179, 208–209 (TG), and Arg-231 contribute to the D-glyceraldehyde 3-phosphate site. Cys-149 serves as the catalytic Nucleophile. Position 313 (Asn-313) interacts with NAD(+).

It belongs to the glyceraldehyde-3-phosphate dehydrogenase family. Homotetramer.

It is found in the cytoplasm. The enzyme catalyses D-glyceraldehyde 3-phosphate + phosphate + NAD(+) = (2R)-3-phospho-glyceroyl phosphate + NADH + H(+). It participates in carbohydrate degradation; glycolysis; pyruvate from D-glyceraldehyde 3-phosphate: step 1/5. This chain is Glyceraldehyde-3-phosphate dehydrogenase 2 (GAP2), found in Kluyveromyces marxianus (Yeast).